A 515-amino-acid polypeptide reads, in one-letter code: Hopanoid C-3 methylase (515 aa).

The 134-residue stretch at 8–141 folds into the B12-binding domain; that stretch reads PSPLMYTKVF…ETLARRGNID (134 aa). The 215-residue stretch at 181 to 395 folds into the Radical SAM core domain; that stretch reads GTLDPCASIE…DIQHAVLPTR (215 aa). Residues Cys-195, Cys-199, and Cys-202 each coordinate [4Fe-4S] cluster.

This sequence belongs to the radical SAM superfamily. The cofactor is [4Fe-4S] cluster.

Its function is as follows. Required for methylation of hopanoids at the C-3 position. The chain is Hopanoid C-3 methylase from Methylococcus capsulatus (strain ATCC 33009 / NCIMB 11132 / Bath).